A 276-amino-acid polypeptide reads, in one-letter code: Melibiose/raffinose/stachyose import permease protein MelC (276 aa).

6 helical membrane-spanning segments follow: residues 11 to 31 (IITL…YILL), 74 to 94 (IITG…AYPL), 104 to 124 (AVFA…MVPL), 139 to 159 (IAIF…YSGF), 186 to 206 (IVFP…CVFI), and 240 to 260 (LHLV…LFLA). One can recognise an ABC transmembrane type-1 domain in the interval 69–261 (FINTMIITGF…LPMVVLFLAL (193 aa)).

This sequence belongs to the binding-protein-dependent transport system permease family. As to quaternary structure, the complex is composed of two ATP-binding proteins (MsmX), two transmembrane proteins (MelC and MelD) and a solute-binding protein (MelE).

It is found in the cell membrane. In terms of biological role, part of the ABC transporter complex MelEDC-MsmX involved in melibiose, raffinose and stachyose import. Probably responsible for the translocation of the substrate across the membrane. This is Melibiose/raffinose/stachyose import permease protein MelC from Bacillus subtilis (strain 168).